A 186-amino-acid chain; its full sequence is tRNA (cytidine(56)-2'-O)-methyltransferase (186 aa).

Residues leucine 84 and glycine 110–valine 114 each bind S-adenosyl-L-methionine.

Belongs to the aTrm56 family. In terms of assembly, homodimer.

It localises to the cytoplasm. The catalysed reaction is cytidine(56) in tRNA + S-adenosyl-L-methionine = 2'-O-methylcytidine(56) in tRNA + S-adenosyl-L-homocysteine + H(+). Functionally, specifically catalyzes the AdoMet-dependent 2'-O-ribose methylation of cytidine at position 56 in tRNAs. In Staphylothermus marinus (strain ATCC 43588 / DSM 3639 / JCM 9404 / F1), this protein is tRNA (cytidine(56)-2'-O)-methyltransferase.